We begin with the raw amino-acid sequence, 40 residues long: Neutral phospholipase A2 homolog cannitoxin beta chain 2 (40 aa).

Heterotrimer of alpha, beta, and gamma chains; non-covalently linked. In terms of tissue distribution, expressed by the venom gland.

It is found in the secreted. In terms of biological role, heterotrimer: Snake venom phospholipase A2 (PLA2) heterotrimer that acts as a potent presynaptic neurotoxin by blocking synaptic transmission and synaptic vesicle recycling. Enzymatic activity is essential for the neurotoxic effects. May act by binding in a calcium-dependent fashion to neurotonal pentraxin-1 (NPTX1) and neurotonal pentraxin-2 (NPTX2), but not to neuronal pentraxin receptor (NPTXR). Also binds to taipoxin-associated calcium binding protein 49 (RCN2), a protein localized in the lumen of endoplasmic reticulum. Its function is as follows. Monomer (beta chain): Snake venom phospholipase A2 homolog that is neither toxic nor enzymatically active. Does not bind calcium. This Oxyuranus scutellatus canni (Papuan taipan) protein is Neutral phospholipase A2 homolog cannitoxin beta chain 2.